Here is a 333-residue protein sequence, read N- to C-terminus: NADH-quinone oxidoreductase subunit H (333 aa).

8 helical membrane-spanning segments follow: residues 17-37 (VIQA…MSFI), 91-111 (VAMA…TLGV), 116-136 (IGLL…LFGG), 156-176 (ISYE…AGSF), 188-208 (MWFI…GVAV), 244-264 (YVNI…GWLA), 272-292 (FIPP…MFVL), and 310-330 (WKVC…VILM).

The protein belongs to the complex I subunit 1 family. As to quaternary structure, NDH-1 is composed of 14 different subunits. Subunits NuoA, H, J, K, L, M, N constitute the membrane sector of the complex.

The protein resides in the cell inner membrane. It catalyses the reaction a quinone + NADH + 5 H(+)(in) = a quinol + NAD(+) + 4 H(+)(out). Functionally, NDH-1 shuttles electrons from NADH, via FMN and iron-sulfur (Fe-S) centers, to quinones in the respiratory chain. The immediate electron acceptor for the enzyme in this species is believed to be ubiquinone. Couples the redox reaction to proton translocation (for every two electrons transferred, four hydrogen ions are translocated across the cytoplasmic membrane), and thus conserves the redox energy in a proton gradient. This subunit may bind ubiquinone. This Acinetobacter baylyi (strain ATCC 33305 / BD413 / ADP1) protein is NADH-quinone oxidoreductase subunit H.